Here is a 304-residue protein sequence, read N- to C-terminus: UDP-3-O-acyl-N-acetylglucosamine deacetylase (304 aa).

Zn(2+) is bound by residues His-78, His-237, and Asp-241. Residue His-264 is the Proton donor of the active site.

It belongs to the LpxC family. Zn(2+) is required as a cofactor.

It carries out the reaction a UDP-3-O-[(3R)-3-hydroxyacyl]-N-acetyl-alpha-D-glucosamine + H2O = a UDP-3-O-[(3R)-3-hydroxyacyl]-alpha-D-glucosamine + acetate. The protein operates within glycolipid biosynthesis; lipid IV(A) biosynthesis; lipid IV(A) from (3R)-3-hydroxytetradecanoyl-[acyl-carrier-protein] and UDP-N-acetyl-alpha-D-glucosamine: step 2/6. In terms of biological role, catalyzes the hydrolysis of UDP-3-O-myristoyl-N-acetylglucosamine to form UDP-3-O-myristoylglucosamine and acetate, the committed step in lipid A biosynthesis. The sequence is that of UDP-3-O-acyl-N-acetylglucosamine deacetylase from Alcanivorax borkumensis (strain ATCC 700651 / DSM 11573 / NCIMB 13689 / SK2).